The following is a 100-amino-acid chain: Large ribosomal subunit protein bL21 (100 aa).

This sequence belongs to the bacterial ribosomal protein bL21 family. In terms of assembly, part of the 50S ribosomal subunit. Contacts protein L20.

This protein binds to 23S rRNA in the presence of protein L20. In Corynebacterium urealyticum (strain ATCC 43042 / DSM 7109), this protein is Large ribosomal subunit protein bL21.